Consider the following 285-residue polypeptide: Pantothenate synthetase (285 aa).

An ATP-binding site is contributed by 30 to 37 (MGNLHQGH). H37 (proton donor) is an active-site residue. A (R)-pantoate-binding site is contributed by Q61. Q61 lines the beta-alanine pocket. 149–152 (GQKD) provides a ligand contact to ATP. A (R)-pantoate-binding site is contributed by Q155. ATP is bound by residues V178 and 186–189 (LSSR).

Belongs to the pantothenate synthetase family. In terms of assembly, homodimer.

Its subcellular location is the cytoplasm. The enzyme catalyses (R)-pantoate + beta-alanine + ATP = (R)-pantothenate + AMP + diphosphate + H(+). It functions in the pathway cofactor biosynthesis; (R)-pantothenate biosynthesis; (R)-pantothenate from (R)-pantoate and beta-alanine: step 1/1. In terms of biological role, catalyzes the condensation of pantoate with beta-alanine in an ATP-dependent reaction via a pantoyl-adenylate intermediate. The polypeptide is Pantothenate synthetase (Aeromonas hydrophila subsp. hydrophila (strain ATCC 7966 / DSM 30187 / BCRC 13018 / CCUG 14551 / JCM 1027 / KCTC 2358 / NCIMB 9240 / NCTC 8049)).